Consider the following 276-residue polypeptide: Golgi apparatus membrane protein TVP23 homolog C (276 aa).

At Met1 the chain carries N-acetylmethionine. Residues 1–21 are disordered; that stretch reads MLQQDSNDDTEDVSLFDAEEE. A run of 2 helical transmembrane segments spans residues 52–72 and 126–146; these read LLCE…ILLL and IFWL…FSAL. Residues 254 to 276 form a disordered region; it reads GESPNSRGTGEPGPKFHLASGMH.

Belongs to the TVP23 family.

The protein localises to the membrane. This chain is Golgi apparatus membrane protein TVP23 homolog C (TVP23C), found in Homo sapiens (Human).